Reading from the N-terminus, the 193-residue chain is UPF0301 protein SAV_5129 (193 aa).

Belongs to the UPF0301 (AlgH) family.

The polypeptide is UPF0301 protein SAV_5129 (Streptomyces avermitilis (strain ATCC 31267 / DSM 46492 / JCM 5070 / NBRC 14893 / NCIMB 12804 / NRRL 8165 / MA-4680)).